A 216-amino-acid chain; its full sequence is GTP cyclohydrolase 1 (216 aa).

Zn(2+) contacts are provided by Cys-108, His-111, and Cys-179.

Belongs to the GTP cyclohydrolase I family. As to quaternary structure, toroid-shaped homodecamer, composed of two pentamers of five dimers.

It catalyses the reaction GTP + H2O = 7,8-dihydroneopterin 3'-triphosphate + formate + H(+). It functions in the pathway cofactor biosynthesis; 7,8-dihydroneopterin triphosphate biosynthesis; 7,8-dihydroneopterin triphosphate from GTP: step 1/1. The chain is GTP cyclohydrolase 1 from Shewanella sp. (strain MR-7).